The chain runs to 884 residues: Kinesin-like protein KIN-7C (884 aa).

A Kinesin motor domain is found at Arg-33–Val-355. Gly-119 to Thr-126 lines the ATP pocket. A coiled-coil region spans residues Val-364–Asp-435. Residues Gly-434–Gly-530 form a disordered region. The segment covering Arg-449–Val-460 has biased composition (low complexity). The span at Ser-461 to Glu-483 shows a compositional bias: basic and acidic residues. The span at Gly-498 to Ser-523 shows a compositional bias: polar residues.

The protein belongs to the TRAFAC class myosin-kinesin ATPase superfamily. Kinesin family. KIN-7 subfamily.

The protein is Kinesin-like protein KIN-7C of Oryza sativa subsp. japonica (Rice).